Consider the following 159-residue polypeptide: H/ACA ribonucleoprotein complex subunit 2-like protein (159 aa).

Positions 1–28 (MAKTPKKDKTEEKEEHEESGGNKEDRER) are disordered.

This sequence belongs to the eukaryotic ribosomal protein eL8 family. Component of the small nucleolar ribonucleoprotein particle containing H/ACA-type snoRNAs (H/ACA snoRNPs). Component of the telomerase holoenzyme complex.

The protein resides in the nucleus. It is found in the nucleolus. Its function is as follows. Required for ribosome biogenesis. Part of a complex which catalyzes pseudouridylation of rRNA. This involves the isomerization of uridine such that the ribose is subsequently attached to C5, instead of the normal N1. Pseudouridine ('psi') residues may serve to stabilize the conformation of rRNAs. This Branchiostoma belcheri (Amphioxus) protein is H/ACA ribonucleoprotein complex subunit 2-like protein.